We begin with the raw amino-acid sequence, 185 residues long: Ribosome-recycling factor (185 aa).

The protein belongs to the RRF family.

The protein localises to the cytoplasm. Functionally, responsible for the release of ribosomes from messenger RNA at the termination of protein biosynthesis. May increase the efficiency of translation by recycling ribosomes from one round of translation to another. This Geobacter sulfurreducens (strain ATCC 51573 / DSM 12127 / PCA) protein is Ribosome-recycling factor.